The following is a 309-amino-acid chain: Porphobilinogen deaminase (309 aa).

An S-(dipyrrolylmethanemethyl)cysteine modification is found at Cys-244.

Belongs to the HMBS family. In terms of assembly, monomer. It depends on dipyrromethane as a cofactor.

It catalyses the reaction 4 porphobilinogen + H2O = hydroxymethylbilane + 4 NH4(+). It participates in porphyrin-containing compound metabolism; protoporphyrin-IX biosynthesis; coproporphyrinogen-III from 5-aminolevulinate: step 2/4. In terms of biological role, tetrapolymerization of the monopyrrole PBG into the hydroxymethylbilane pre-uroporphyrinogen in several discrete steps. This is Porphobilinogen deaminase from Listeria monocytogenes serotype 4a (strain HCC23).